We begin with the raw amino-acid sequence, 176 residues long: Outer membrane protein assembly factor BamE (176 aa).

An N-terminal signal peptide occupies residues 1–21; it reads MQNAKLMLTCLAFAGLAALAG. A lipid anchor (N-palmitoyl cysteine) is attached at Cys-22. Cys-22 carries the S-diacylglycerol cysteine lipid modification. The segment at 121–176 is disordered; sequence KEGSTTVTQPADQQKPEAQKEEPPKPGSTLEQLQREVDEAQPVPVPTPEPLDPSPQ. Over residues 123–132 the composition is skewed to polar residues; sequence GSTTVTQPAD. The span at 134–144 shows a compositional bias: basic and acidic residues; the sequence is QKPEAQKEEPP. Residues 163–176 are compositionally biased toward pro residues; sequence VPVPTPEPLDPSPQ.

This sequence belongs to the BamE family. In terms of assembly, part of the Bam complex.

The protein resides in the cell outer membrane. Functionally, part of the outer membrane protein assembly complex, which is involved in assembly and insertion of beta-barrel proteins into the outer membrane. May have a structural role in maintaining the cell envelope integrity. This is Outer membrane protein assembly factor BamE from Pseudomonas aeruginosa (strain ATCC 15692 / DSM 22644 / CIP 104116 / JCM 14847 / LMG 12228 / 1C / PRS 101 / PAO1).